The primary structure comprises 347 residues: N-acetyl-gamma-glutamyl-phosphate reductase (347 aa).

Cys151 is a catalytic residue.

The protein belongs to the NAGSA dehydrogenase family. Type 1 subfamily.

It is found in the cytoplasm. The enzyme catalyses N-acetyl-L-glutamate 5-semialdehyde + phosphate + NADP(+) = N-acetyl-L-glutamyl 5-phosphate + NADPH + H(+). The protein operates within amino-acid biosynthesis; L-arginine biosynthesis; N(2)-acetyl-L-ornithine from L-glutamate: step 3/4. Catalyzes the NADPH-dependent reduction of N-acetyl-5-glutamyl phosphate to yield N-acetyl-L-glutamate 5-semialdehyde. The polypeptide is N-acetyl-gamma-glutamyl-phosphate reductase (Corynebacterium diphtheriae (strain ATCC 700971 / NCTC 13129 / Biotype gravis)).